The chain runs to 297 residues: Averufin oxidase stcO (297 aa).

A helical membrane pass occupies residues 277-297; sequence VVVLGVCILLLLGGLLYSIKA.

Belongs to the avfA family.

It localises to the membrane. Its pathway is mycotoxin biosynthesis; sterigmatocystin biosynthesis. In terms of biological role, averufin oxidase; part of the gene cluster that mediates the biosynthesis of sterigmatocystin (ST), a polyketide-derived furanocoumarin which is part of the most toxic and carcinogenic compounds among the known mycotoxins. The first step in the biosynthesis of sterigmatocystin is the production of hexanoate by the fatty acid synthase (FAS) units stcJ and stcK. The polyketide backbone is assembled by the non-reducing polyketide synthase stcA by condensation of the starter hexanoyl-CoA and 7 malonyl-CoA extender units followed by cyclization and release of norsolorinic acid. Norsolorinic acid is the first stable intermediate in the biosynthesis of sterigmatocystin and is converted into averantin (AVN) by the ketoreductase stcE which reduces the hexanoate ketone to an alcohol. Averantin is then oxidized into 5'-hydroxyaverantin (HAVN) by the cytochrome P450 monooxygenase stcF. 5'-hydroxyaverantin is further converted to 5'-oxyaverantin (OAVN) by the 5'-hydroxyaverantin dehydrogenase stcG. The next step is the conversion of OAVN into averufin (AVF) which is catalyzed by a yet to be identified enzyme. The cytochrome P450 monooxygenase stcB and the flavin-binding monooxygenase stcW are both required for the conversion of averufin to 1-hydroxyversicolorone. The esterase stcI probably catalyzes the formation of versiconal hemiacetal acetate from 1-hydroxyversicolorone. The oxydoreductase stcN then probably catalyzes the biosynthetic step from versiconal to versicolorin B (VERB). The next step is performed by the versicolorin B desaturase stcL to produce versicolorin A (VERA). The ketoreductase stcU and the cytochrome P450 monooxygenase stcS are involved in the conversion of versicolorin A to demethylsterigmatocystin. The Baeyer-Villiger oxidas stcQ and the reductase stcR might be involved in the biosynthetic step from versicolorin A to demethylsterigmatocystin. The final step in the biosynthesis of sterigmatocystin is the methylation of demethylsterigmatocystin catalyzed by the methyltransferase stcP. The chain is Averufin oxidase stcO from Emericella nidulans (strain FGSC A4 / ATCC 38163 / CBS 112.46 / NRRL 194 / M139) (Aspergillus nidulans).